The primary structure comprises 167 residues: MQKIQSNQIQEQDLTPELKKWLYASGSLTQQLTDLADGLFTVEPIQEKYQRMSFMDSRWMRMPAYHVAWVRESLLYGCEQQPWVKAKSIFPVLSLQKKARIFKHIGKKPIGRFLFQRTTPLCERRVIRLEEGWTRQSCYTWHGCKFIVQETFLASFEQYIQHHSHSI.

Substrate-binding residues include Arg71, Ile110, and Glu150.

Belongs to the UbiC family.

Its subcellular location is the cytoplasm. It catalyses the reaction chorismate = 4-hydroxybenzoate + pyruvate. Its pathway is cofactor biosynthesis; ubiquinone biosynthesis. In terms of biological role, removes the pyruvyl group from chorismate, with concomitant aromatization of the ring, to provide 4-hydroxybenzoate (4HB) for the ubiquinone pathway. This is Probable chorismate pyruvate-lyase from Acinetobacter baylyi (strain ATCC 33305 / BD413 / ADP1).